A 94-amino-acid polypeptide reads, in one-letter code: Integration host factor subunit beta (94 aa).

It belongs to the bacterial histone-like protein family. Heterodimer of an alpha and a beta chain.

In terms of biological role, this protein is one of the two subunits of integration host factor, a specific DNA-binding protein that functions in genetic recombination as well as in transcriptional and translational control. The chain is Integration host factor subunit beta (ihfB) from Pasteurella multocida (strain Pm70).